Reading from the N-terminus, the 547-residue chain is CAP-Gly domain-containing linker protein 3 (547 aa).

Residues 1-49 (MTKTDPAPMAPPPRGEEEEEEEEDEPVPEAPSPTQERRQKPVVHPSAPA) form a disordered region. Positions 16-27 (EEEEEEEEDEPV) are enriched in acidic residues. ANK repeat units lie at residues 117–158 (TDMT…LRSR), 160–191 (TNMNALHYAAYFDVPDLVRVLLKGARPRVVNS), and 197–229 (NHGSALHIAASNLCLGAAKCLLEHGANPALRNR). One can recognise a CAP-Gly 1 domain in the interval 314–356 (GTTEFASGQWVGVELDEPEGKNDGSVGGVRYFICPPKQGLFAS). The interval 365–413 (DAPPSSVTSTPRTPRMDFSRVTGKGRREHKGKKKSPSSPSLGSLQQREG) is disordered. The span at 367-377 (PPSSVTSTPRT) shows a compositional bias: low complexity. At T374 the chain carries Phosphothreonine. Positions 387–399 (GKGRREHKGKKKS) are enriched in basic residues. 2 positions are modified to phosphoserine: S399 and S401. The CAP-Gly 2 domain occupies 436-478 (GKTDFAPGYWYGIELDQPTGKHDGSVFGVRYFTCAPRHGVFAP). Residues 488-547 (STDPPGDSVGAKKVHQVTMTQPKRTFTTVRTPKDIASENSISRLLFCCWFPWMLRAEMQS) are goLD. S-palmitoyl cysteine attachment occurs at residues C534 and C535.

Homodimer. Interacts with AKT1 and AKT2; when AKT1 and AKT2 are phosphorylated and activated, affinity is higher for AKT2. Interacts with ZDHHC13 (via ANK repeats). Interacts with ZDHHC17 (via ANK repeats). In terms of processing, palmitoylation by ZDHHC17 regulates association with the plasma membrane.

It is found in the cell membrane. Its subcellular location is the cytoplasm. The protein localises to the golgi apparatus. It localises to the golgi stack. Functions as a cytoplasmic linker protein. Involved in TGN-endosome dynamics. May modulate the cellular compartmentalization of AKT kinase family and promote its cell membrane localization, thereby playing a role in glucose transport in adipocytes. This chain is CAP-Gly domain-containing linker protein 3 (Clip3), found in Mus musculus (Mouse).